Reading from the N-terminus, the 157-residue chain is Protein MGF 110-13L (157 aa).

Transmembrane regions (helical) follow at residues Gln-14–Cys-34 and Leu-39–Val-59.

This sequence belongs to the asfivirus MGF 110 family.

The protein localises to the host membrane. In terms of biological role, plays a role in virus cell tropism, and may be required for efficient virus replication in macrophages. This African swine fever virus (isolate Tick/Malawi/Lil 20-1/1983) (ASFV) protein is Protein MGF 110-13L.